The chain runs to 437 residues: Homogentisate 1,2-dioxygenase (437 aa).

The Proton acceptor role is filled by His295. 2 residues coordinate Fe cation: His338 and Glu344. Homogentisate is bound by residues Tyr353 and His374. Residue His374 coordinates Fe cation.

Belongs to the homogentisate dioxygenase family. Hexamer; dimer of trimers. Requires Fe cation as cofactor.

The catalysed reaction is homogentisate + O2 = 4-maleylacetoacetate + H(+). Its pathway is amino-acid degradation; L-phenylalanine degradation; acetoacetate and fumarate from L-phenylalanine: step 4/6. Functionally, involved in the catabolism of homogentisate (2,5-dihydroxyphenylacetate or 2,5-OH-PhAc), a central intermediate in the degradation of phenylalanine and tyrosine. Catalyzes the oxidative ring cleavage of the aromatic ring of homogentisate to yield maleylacetoacetate. The sequence is that of Homogentisate 1,2-dioxygenase from Myxococcus xanthus (strain DK1622).